Reading from the N-terminus, the 253-residue chain is MDTTVKIDARDVNFWYGDFHALKGISMEIEEKSVVAFIGPSGCGKSTFLRLFNRMNDLIPATRLTGEIRIDGENIYDKGVQVDELRKNVGMVFQRPNPFPKSIFENVAYGLRVNGVKDNAFIRQRVEETLKGAALWDEVKDKLKESAFALSGGQQQRLCIARAMAVSPSVLLMDEPASALDPISTAKVEELIHELKERYTIVIVTHNMQQAARVSDKTAFFYMGQMVEFGDTKKIFTNPEKEATQNYITGRFG.

The region spanning 7–248 (IDARDVNFWY…PEKEATQNYI (242 aa)) is the ABC transporter domain. Residue 39 to 46 (GPSGCGKS) participates in ATP binding.

Belongs to the ABC transporter superfamily. Phosphate importer (TC 3.A.1.7) family. As to quaternary structure, the complex is composed of two ATP-binding proteins (PstB), two transmembrane proteins (PstC and PstA) and a solute-binding protein (PstS).

The protein localises to the cell inner membrane. The catalysed reaction is phosphate(out) + ATP + H2O = ADP + 2 phosphate(in) + H(+). Part of the ABC transporter complex PstSACB involved in phosphate import. Responsible for energy coupling to the transport system. The protein is Phosphate import ATP-binding protein PstB of Bacteroides fragilis (strain ATCC 25285 / DSM 2151 / CCUG 4856 / JCM 11019 / LMG 10263 / NCTC 9343 / Onslow / VPI 2553 / EN-2).